A 37-amino-acid polypeptide reads, in one-letter code: Large ribosomal subunit protein bL36 (37 aa).

This sequence belongs to the bacterial ribosomal protein bL36 family.

The chain is Large ribosomal subunit protein bL36 from Desulforudis audaxviator (strain MP104C).